The sequence spans 257 residues: NAD-capped RNA hydrolase NudC (257 aa).

Residues lysine 25 and arginine 69 each coordinate substrate. Zn(2+) is bound by residues cysteine 98 and cysteine 101. Glutamate 111 serves as a coordination point for substrate. Zn(2+) is bound by residues cysteine 116 and cysteine 119. Tyrosine 124 contacts substrate. The 124-residue stretch at 125–248 folds into the Nudix hydrolase domain; sequence PQIAPCIIVA…TVARRLIEDT (124 aa). Residues alanine 158, glutamate 174, and glutamate 178 each contribute to the a divalent metal cation site. The short motif at 159–180 is the Nudix box element; it reads GFVEVGETLEQAVAREVMEESG. A substrate-binding site is contributed by 192–199; sequence QPWPFPQS. Position 219 (glutamate 219) interacts with a divalent metal cation. Alanine 241 lines the substrate pocket.

This sequence belongs to the Nudix hydrolase family. NudC subfamily. In terms of assembly, homodimer. Requires Mg(2+) as cofactor. Mn(2+) serves as cofactor. The cofactor is Zn(2+).

It carries out the reaction a 5'-end NAD(+)-phospho-ribonucleoside in mRNA + H2O = a 5'-end phospho-adenosine-phospho-ribonucleoside in mRNA + beta-nicotinamide D-ribonucleotide + 2 H(+). The enzyme catalyses NAD(+) + H2O = beta-nicotinamide D-ribonucleotide + AMP + 2 H(+). It catalyses the reaction NADH + H2O = reduced beta-nicotinamide D-ribonucleotide + AMP + 2 H(+). In terms of biological role, mRNA decapping enzyme that specifically removes the nicotinamide adenine dinucleotide (NAD) cap from a subset of mRNAs by hydrolyzing the diphosphate linkage to produce nicotinamide mononucleotide (NMN) and 5' monophosphate mRNA. The NAD-cap is present at the 5'-end of some mRNAs and stabilizes RNA against 5'-processing. Has preference for mRNAs with a 5'-end purine. Catalyzes the hydrolysis of a broad range of dinucleotide pyrophosphates. The sequence is that of NAD-capped RNA hydrolase NudC from Shigella flexneri.